The following is a 98-amino-acid chain: Citrate lyase acyl carrier protein (98 aa).

O-(phosphoribosyl dephospho-coenzyme A)serine is present on serine 14.

Belongs to the CitD family. In terms of assembly, oligomer with a subunit composition of (alpha,beta,gamma)6.

The protein localises to the cytoplasm. In terms of biological role, covalent carrier of the coenzyme of citrate lyase. The sequence is that of Citrate lyase acyl carrier protein from Shigella boydii serotype 4 (strain Sb227).